The sequence spans 156 residues: Xanthocillin biosynthesis cluster protein D (156 aa).

Asn-107 and Asn-120 each carry an N-linked (GlcNAc...) asparagine glycan. A helical membrane pass occupies residues Ile-131–Leu-153.

It is found in the membrane. Its pathway is secondary metabolite biosynthesis. Its function is as follows. Part of the gene cluster that mediates the biosynthesis of the isocyanide xanthocillin and its derivatives. The first step of the pathway consists in the conversion of tyrosine into a vinyl-isonitrile intermediate by the isocyanide synthase xanB. Subsequent oxidative dimerization of this intermediate to form xanthocillin may involve the cytochrome P450 monooxygenase xanG, whose expression is coregulated with that of XanB. Xanthocillin can be further modified by the isonitrile hydratase-like protein xanA which introduces N-formyl groups and the methyltransferase xanE which introduces methyl groups, leading to the production of several derivatives including fumiformamide. Finally, fumiformamide can be subject to both oxidative and reductive cyclization to yield melanocins E and F, respectively. The sequence is that of Xanthocillin biosynthesis cluster protein D from Aspergillus fumigatus (strain ATCC MYA-4609 / CBS 101355 / FGSC A1100 / Af293) (Neosartorya fumigata).